The sequence spans 240 residues: Uridylate kinase (240 aa).

ATP is bound at residue 14 to 17 (KLSG). Gly56 provides a ligand contact to UMP. ATP is bound by residues Gly57 and Arg61. Residues Asp76 and 137 to 144 (TGNPFFTT) each bind UMP. ATP is bound by residues Thr164, Tyr170, and Asp173.

This sequence belongs to the UMP kinase family. In terms of assembly, homohexamer.

It localises to the cytoplasm. It carries out the reaction UMP + ATP = UDP + ADP. It participates in pyrimidine metabolism; CTP biosynthesis via de novo pathway; UDP from UMP (UMPK route): step 1/1. Its activity is regulated as follows. Inhibited by UTP. Functionally, catalyzes the reversible phosphorylation of UMP to UDP. This Albidiferax ferrireducens (strain ATCC BAA-621 / DSM 15236 / T118) (Rhodoferax ferrireducens) protein is Uridylate kinase.